Reading from the N-terminus, the 131-residue chain is MIVRTTDEITGTERDVAGPGWRSKRIVLGGDGVGFSFHETTIDAGTTHEFHYVHHIEAVWLVEGEGTLTDLDNDQVYDLRPGTMYLLNGHEKHRVQARTTMRMMCVFNPPVTGQEVHDENGVYPLVAVPAS.

It belongs to the ectoine synthase family.

The enzyme catalyses (2S)-4-acetamido-2-aminobutanoate = L-ectoine + H2O. Its pathway is amine and polyamine biosynthesis; ectoine biosynthesis; L-ectoine from L-aspartate 4-semialdehyde: step 3/3. In terms of biological role, catalyzes the circularization of gamma-N-acetyl-alpha,gamma-diaminobutyric acid (ADABA) to ectoine (1,4,5,6-tetrahydro-2-methyl-4-pyrimidine carboxylic acid), which is an excellent osmoprotectant. This is L-ectoine synthase from Nocardia farcinica (strain IFM 10152).